The following is a 154-amino-acid chain: Myoglobin (154 aa).

Residues 2 to 148 (GLSEGEWQLV…FRKDIATKYK (147 aa)) enclose the Globin domain. S4 is modified (phosphoserine). Nitrite is bound at residue H65. H65 is a binding site for O2. T68 bears the Phosphothreonine mark. H94 serves as a coordination point for heme b.

The protein belongs to the globin family. In terms of assembly, monomeric.

It localises to the cytoplasm. The protein localises to the sarcoplasm. The catalysed reaction is Fe(III)-heme b-[protein] + nitric oxide + H2O = Fe(II)-heme b-[protein] + nitrite + 2 H(+). It catalyses the reaction H2O2 + AH2 = A + 2 H2O. In terms of biological role, monomeric heme protein which primary function is to store oxygen and facilitate its diffusion within muscle tissues. Reversibly binds oxygen through a pentacoordinated heme iron and enables its timely and efficient release as needed during periods of heightened demand. Depending on the oxidative conditions of tissues and cells, and in addition to its ability to bind oxygen, it also has a nitrite reductase activity whereby it regulates the production of bioactive nitric oxide. Under stress conditions, like hypoxia and anoxia, it also protects cells against reactive oxygen species thanks to its pseudoperoxidase activity. This Phocoenoides dalli dalli (Dall's porpoise) protein is Myoglobin (MB).